Consider the following 444-residue polypeptide: Cerebral cavernous malformations 2 protein (444 aa).

A disordered region spans residues 1–37 (MEEEGKKGKKPGIVSPFKRVFLKGEKSRDKKAHEKVT). Ser-15 carries the post-translational modification Phosphoserine. Residues 22-37 (LKGEKSRDKKAHEKVT) show a composition bias toward basic and acidic residues. In terms of domain architecture, PID spans 59 to 248 (LSDYIEKEVK…TPTHHLSLHS (190 aa)). Phosphoserine is present on Ser-164. A harmonin homology domain region spans residues 283 to 376 (SKTISESELS…NFLETIGVKD (94 aa)). Phosphoserine occurs at positions 384 and 393. The disordered stretch occupies residues 391–423 (ALSTTSSSTTNGNRATGSSDDRSAPSEGDEWDR). Low complexity predominate over residues 392-408 (LSTTSSSTTNGNRATGS). Thr-394 carries the phosphothreonine modification. Ser-396 is modified (phosphoserine). Thr-399 carries the phosphothreonine modification.

Belongs to the CCM2 family. As to quaternary structure, part of a complex with MAP2K3, MAP3K3 and RAC1. Binds RAC1 directly and independently of its nucleotide-bound state. Interacts with HEG1 and KRIT1; KRIT1 greatly facilitates the interaction with HEG1. Interacts with PDCD10.

The protein resides in the cytoplasm. Functionally, component of the CCM signaling pathway which is a crucial regulator of heart and vessel formation and integrity. May act through the stabilization of endothelial cell junctions. May function as a scaffold protein for MAP2K3-MAP3K3 signaling. Seems to play a major role in the modulation of MAP3K3-dependent p38 activation induced by hyperosmotic shock. This Homo sapiens (Human) protein is Cerebral cavernous malformations 2 protein (CCM2).